A 485-amino-acid chain; its full sequence is Glutamate--tRNA ligase (485 aa).

The 'HIGH' region signature appears at 11-21; sequence PSPTGHLHIGN. The 'KMSKS' region signature appears at 252 to 256; that stretch reads KLSKR. Residue K255 participates in ATP binding.

Belongs to the class-I aminoacyl-tRNA synthetase family. Glutamate--tRNA ligase type 1 subfamily. As to quaternary structure, monomer.

Its subcellular location is the cytoplasm. It catalyses the reaction tRNA(Glu) + L-glutamate + ATP = L-glutamyl-tRNA(Glu) + AMP + diphosphate. Catalyzes the attachment of glutamate to tRNA(Glu) in a two-step reaction: glutamate is first activated by ATP to form Glu-AMP and then transferred to the acceptor end of tRNA(Glu). This is Glutamate--tRNA ligase from Bacillus mycoides (strain KBAB4) (Bacillus weihenstephanensis).